Reading from the N-terminus, the 185-residue chain is Ribosome-recycling factor (185 aa).

The protein belongs to the RRF family.

It localises to the cytoplasm. In terms of biological role, responsible for the release of ribosomes from messenger RNA at the termination of protein biosynthesis. May increase the efficiency of translation by recycling ribosomes from one round of translation to another. In Geobacter sp. (strain M21), this protein is Ribosome-recycling factor.